A 199-amino-acid chain; its full sequence is Chaperone protein TorD (199 aa).

This sequence belongs to the TorD/DmsD family. TorD subfamily.

The protein localises to the cytoplasm. Its function is as follows. Involved in the biogenesis of TorA. Acts on TorA before the insertion of the molybdenum cofactor and, as a result, probably favors a conformation of the apoenzyme that is competent for acquiring the cofactor. The polypeptide is Chaperone protein TorD (Escherichia coli O6:H1 (strain CFT073 / ATCC 700928 / UPEC)).